We begin with the raw amino-acid sequence, 602 residues long: Aspartate--tRNA(Asp/Asn) ligase (602 aa).

An L-aspartate-binding site is contributed by Glu-175. Residues 199–202 (QIFK) are aspartate. Arg-221 contacts L-aspartate. Residues 221–223 (RDE) and Gln-230 each bind ATP. His-458 contacts L-aspartate. Glu-492 lines the ATP pocket. Residue Arg-499 coordinates L-aspartate. 544–547 (GLDR) is a binding site for ATP.

Belongs to the class-II aminoacyl-tRNA synthetase family. Type 1 subfamily. As to quaternary structure, homodimer.

The protein resides in the cytoplasm. The catalysed reaction is tRNA(Asx) + L-aspartate + ATP = L-aspartyl-tRNA(Asx) + AMP + diphosphate. Functionally, aspartyl-tRNA synthetase with relaxed tRNA specificity since it is able to aspartylate not only its cognate tRNA(Asp) but also tRNA(Asn). Reaction proceeds in two steps: L-aspartate is first activated by ATP to form Asp-AMP and then transferred to the acceptor end of tRNA(Asp/Asn). The chain is Aspartate--tRNA(Asp/Asn) ligase from Cupriavidus pinatubonensis (strain JMP 134 / LMG 1197) (Cupriavidus necator (strain JMP 134)).